Reading from the N-terminus, the 382-residue chain is Quinolinate synthase (382 aa).

Iminosuccinate is bound by residues His63 and Ser84. Cys129 is a binding site for [4Fe-4S] cluster. Residues 155 to 157 and Ser172 contribute to the iminosuccinate site; that span reads YAN. Cys216 lines the [4Fe-4S] cluster pocket. Iminosuccinate contacts are provided by residues 242–244 and Thr259; that span reads HPE. Cys313 lines the [4Fe-4S] cluster pocket.

This sequence belongs to the quinolinate synthase family. Type 1 subfamily. The cofactor is [4Fe-4S] cluster.

The protein resides in the cytoplasm. It catalyses the reaction iminosuccinate + dihydroxyacetone phosphate = quinolinate + phosphate + 2 H2O + H(+). It functions in the pathway cofactor biosynthesis; NAD(+) biosynthesis; quinolinate from iminoaspartate: step 1/1. Its function is as follows. Catalyzes the condensation of iminoaspartate with dihydroxyacetone phosphate to form quinolinate. The sequence is that of Quinolinate synthase from Ralstonia pickettii (strain 12J).